The chain runs to 180 residues: Shikimate kinase (180 aa).

ATP is bound at residue 14-19; the sequence is GAGKST. Ser-18 serves as a coordination point for Mg(2+). The substrate site is built by Asp-36, Arg-60, and Gly-82. Arg-120 contributes to the ATP binding site. Arg-140 provides a ligand contact to substrate. Gln-157 contributes to the ATP binding site.

The protein belongs to the shikimate kinase family. In terms of assembly, monomer. Requires Mg(2+) as cofactor.

The protein resides in the cytoplasm. It catalyses the reaction shikimate + ATP = 3-phosphoshikimate + ADP + H(+). It functions in the pathway metabolic intermediate biosynthesis; chorismate biosynthesis; chorismate from D-erythrose 4-phosphate and phosphoenolpyruvate: step 5/7. Catalyzes the specific phosphorylation of the 3-hydroxyl group of shikimic acid using ATP as a cosubstrate. The chain is Shikimate kinase from Haemophilus influenzae (strain PittGG).